A 197-amino-acid polypeptide reads, in one-letter code: Na(+)-translocating NADH-quinone reductase subunit E (197 aa).

The next 6 membrane-spanning stretches (helical) occupy residues 11–31 (SVFI…FLAV), 35–55 (VSTA…SVPA), 76–96 (FLKF…LEMF), 108–128 (LGIY…VSFM), 139–159 (VVYG…LAGI), and 175–195 (LGIT…FSGI).

This sequence belongs to the NqrDE/RnfAE family. As to quaternary structure, composed of six subunits; NqrA, NqrB, NqrC, NqrD, NqrE and NqrF.

Its subcellular location is the cell inner membrane. The catalysed reaction is a ubiquinone + n Na(+)(in) + NADH + H(+) = a ubiquinol + n Na(+)(out) + NAD(+). NQR complex catalyzes the reduction of ubiquinone-1 to ubiquinol by two successive reactions, coupled with the transport of Na(+) ions from the cytoplasm to the periplasm. NqrA to NqrE are probably involved in the second step, the conversion of ubisemiquinone to ubiquinol. This Neisseria gonorrhoeae (strain ATCC 700825 / FA 1090) protein is Na(+)-translocating NADH-quinone reductase subunit E.